A 242-amino-acid polypeptide reads, in one-letter code: Pyridoxine 5'-phosphate synthase (242 aa).

Position 8 (Asn-8) interacts with 3-amino-2-oxopropyl phosphate. 10–11 (DH) serves as a coordination point for 1-deoxy-D-xylulose 5-phosphate. Residue Arg-19 coordinates 3-amino-2-oxopropyl phosphate. His-44 functions as the Proton acceptor in the catalytic mechanism. Residues Arg-46 and His-51 each contribute to the 1-deoxy-D-xylulose 5-phosphate site. Glu-71 serves as the catalytic Proton acceptor. Position 101 (Thr-101) interacts with 1-deoxy-D-xylulose 5-phosphate. Residue His-193 is the Proton donor of the active site. Residues Gly-194 and 215–216 (GF) each bind 3-amino-2-oxopropyl phosphate.

It belongs to the PNP synthase family. In terms of assembly, homooctamer; tetramer of dimers.

The protein localises to the cytoplasm. It catalyses the reaction 3-amino-2-oxopropyl phosphate + 1-deoxy-D-xylulose 5-phosphate = pyridoxine 5'-phosphate + phosphate + 2 H2O + H(+). It participates in cofactor biosynthesis; pyridoxine 5'-phosphate biosynthesis; pyridoxine 5'-phosphate from D-erythrose 4-phosphate: step 5/5. Its function is as follows. Catalyzes the complicated ring closure reaction between the two acyclic compounds 1-deoxy-D-xylulose-5-phosphate (DXP) and 3-amino-2-oxopropyl phosphate (1-amino-acetone-3-phosphate or AAP) to form pyridoxine 5'-phosphate (PNP) and inorganic phosphate. This chain is Pyridoxine 5'-phosphate synthase, found in Elusimicrobium minutum (strain Pei191).